The primary structure comprises 769 residues: Neprilysin-21 (769 aa).

Residues 1-26 (MKPENGAATWHPAKRSCLGRLTTLET) lie on the Cytoplasmic side of the membrane. A helical; Signal-anchor for type II membrane protein transmembrane segment spans residues 27–47 (LLLVFLGLLITALLSVLFLWL). Residues 48 to 769 (WVLDGYKTFT…MNPERKCQVW (722 aa)) are Extracellular-facing. Asn-69 carries an N-linked (GlcNAc...) asparagine glycan. Residues 85–769 (VCTSRECVRL…MNPERKCQVW (685 aa)) enclose the Peptidase M13 domain. Cystine bridges form between Cys-86–Cys-91, Cys-109–Cys-754, Cys-117–Cys-714, Cys-173–Cys-428, and Cys-638–Cys-766. Asn-221, Asn-240, Asn-272, Asn-307, Asn-356, Asn-412, and Asn-506 each carry an N-linked (GlcNAc...) asparagine glycan. His-601 is a Zn(2+) binding site. Glu-602 is a catalytic residue. Zn(2+)-binding residues include His-605 and Glu-663. Asp-667 functions as the Proton donor in the catalytic mechanism. 2 N-linked (GlcNAc...) asparagine glycosylation sites follow: Asn-684 and Asn-698.

This sequence belongs to the peptidase M13 family. The cofactor is Zn(2+).

It localises to the cell membrane. In terms of biological role, probable cell surface protease. The protein is Neprilysin-21 (nep-21) of Caenorhabditis elegans.